Reading from the N-terminus, the 1484-residue chain is Glutamate receptor ionotropic, NMDA 2B (1484 aa).

Residues 1 to 26 (MKPRAECCSPKFWLVLAVLAVSGSRA) form the signal peptide. Over 27–555 (RSQKSPPSIG…SPSAFLEPFS (529 aa)) the chain is Extracellular. Asn74 carries N-linked (GlcNAc...) asparagine glycosylation. The cysteines at positions 86 and 321 are disulfide-linked. Zn(2+)-binding residues include His127 and Glu284. Residues Asn341, Asn348, Asn444, and Asn491 are each glycosylated (N-linked (GlcNAc...) asparagine). 2 disulfides stabilise this stretch: Cys429–Cys456 and Cys436–Cys457. L-glutamate contacts are provided by Thr514 and Arg519. Asn542 carries an N-linked (GlcNAc...) asparagine glycan. A helical membrane pass occupies residues 556 to 576 (ADVWVMMFVMLLIVSAVAVFV). The Cytoplasmic segment spans residues 577 to 601 (FEYFSPVGYNRCLADGREPGGPSFT). Positions 602-613 (IGKAIWLLWGLV) form an intramembrane region, discontinuously helical. The tract at residues 604–623 (KAIWLLWGLVFNNSVPVQNP) is pore-forming. The Cytoplasmic portion of the chain corresponds to 614-627 (FNNSVPVQNPKGTT). Residues 628–647 (SKIMVSVWAFFAVIFLASYT) form a helical membrane-spanning segment. The Extracellular segment spans residues 648–819 (ANLAAFMIQE…SSQLDIDNMA (172 aa)). Asn688 carries an N-linked (GlcNAc...) asparagine glycan. L-glutamate-binding positions include 690-691 (ST) and Asp732. The chain crosses the membrane as a helical span at residues 820–835 (GVFYMLGAAMALSLIT). The Cytoplasmic portion of the chain corresponds to 836 to 1484 (FICEHLFYWQ…EKLSSIESDV (649 aa)). 4 positions are modified to phosphoserine: Ser882, Ser886, Ser917, and Ser920. Phosphotyrosine occurs at positions 962 and 1039. Phosphoserine is present on residues Ser1058, Ser1061, and Ser1064. Residues 1074–1097 (EGNAAKRRKQQYKDSLKKRPASAK) are disordered. Tyr1109 and Tyr1133 each carry phosphotyrosine. The residue at position 1143 (Ser1143) is a Phosphoserine. At Tyr1155 the chain carries Phosphotyrosine. Positions 1161 to 1194 (DFKRDSVSGGGPCTNRSHIKHGTGDKHGVVSGVP) are disordered. Ser1255 and Ser1259 each carry phosphoserine. The tract at residues 1271 to 1301 (AVTSNASTTKYPQSPTNSKAQKKNRNKLRRQ) is disordered. Positions 1272–1289 (VTSNASTTKYPQSPTNSK) are enriched in polar residues. Residues 1290–1301 (AQKKNRNKLRRQ) are compositionally biased toward basic residues. The interval 1292 to 1304 (KKNRNKLRRQHSY) is interaction with DAPK1. Position 1303 is a phosphoserine; by DAPK1 (Ser1303). Tyr1474 is subject to Phosphotyrosine. The PDZ-binding signature appears at 1482-1484 (SDV).

The protein belongs to the glutamate-gated ion channel (TC 1.A.10.1) family. NR2B/GRIN2B subfamily. As to quaternary structure, heterotetramer. Forms heterotetrameric channels composed of two GluN1/zeta subunits (GRIN1), and two identical GluN2/epsilon subunits (GRIN2A, GRIN2B, GRIN2C or GRIN2D) or GluN3 subunits (GRIN3A or GRIN3B) (in vitro). Can also form heterotetrameric channels that contain at least two GluN1 subunits and at least two different GluN2 subunits (or a combination of one GluN2 and one GluN3 subunits) (in vitro). In vivo, the subunit composition may depend on the expression levels of the different subunits. Found in a complex with GRIN1 and GRIN3B. Found in a complex with GRIN1, GRIN3A and PPP2CB. Interacts with PDZ domains of PATJ, DLG3 and DLG4. Interacts with HIP1 and NETO1. Interacts with MAGI3. Interacts with DAPK1. Found in a complex with GRIN1 and PRR7. Interacts with PRR7. Interacts with CAMK2A. Interacts with ARC; preventing ARC oligomerization. Interacts with TMEM25. Interacts (via the extreme C-terminus) with FRMPD2 (via the second PDZ domain); the interaction is direct and is likely to promote NMDAR-mediated neural signal transmission. Interacts with FAM81A; the interaction facilitates condensate formation via liquid-liquid phase separation. In terms of processing, phosphorylated on tyrosine residues. Phosphorylation at Ser-1303 by DAPK1 enhances synaptic NMDA receptor channel activity. In terms of tissue distribution, primarily found in the fronto-parieto-temporal cortex and hippocampus pyramidal cells, lower expression in the basal ganglia.

It localises to the cell membrane. The protein resides in the postsynaptic cell membrane. It is found in the cell projection. Its subcellular location is the dendrite. The protein localises to the late endosome. It localises to the lysosome. The protein resides in the cytoplasm. It is found in the cytoskeleton. The enzyme catalyses Ca(2+)(in) = Ca(2+)(out). The catalysed reaction is Na(+)(in) = Na(+)(out). It catalyses the reaction K(+)(in) = K(+)(out). Component of N-methyl-D-aspartate (NMDA) receptors (NMDARs) that function as heterotetrameric, ligand-gated cation channels with high calcium permeability and voltage-dependent block by Mg(2+). Participates in synaptic plasticity for learning and memory formation by contributing to the long-term depression (LTD) of hippocampus membrane currents. Channel activation requires binding of the neurotransmitter L-glutamate to the GluN2 subunit, glycine or D-serine binding to the GluN1 subunit, plus membrane depolarization to eliminate channel inhibition by Mg(2+). NMDARs mediate simultaneously the potasium efflux and the influx of calcium and sodium. Each GluN2 subunit confers differential attributes to channel properties, including activation, deactivation and desensitization kinetics, pH sensitivity, Ca2(+) permeability, and binding to allosteric modulators. In concert with DAPK1 at extrasynaptic sites, acts as a central mediator for stroke damage. Its phosphorylation at Ser-1303 by DAPK1 enhances synaptic NMDA receptor channel activity inducing injurious Ca2+ influx through them, resulting in an irreversible neuronal death. This is Glutamate receptor ionotropic, NMDA 2B from Homo sapiens (Human).